The primary structure comprises 140 residues: Protein KRTCAP2 homolog (140 aa).

4 consecutive transmembrane segments (helical) span residues 11-31 (LLSS…LRFC), 40-60 (LNVL…LTCV), 74-94 (AKLV…AGIV), and 98-118 (CATT…RISI).

This sequence belongs to the KRTCAP2 family. In terms of assembly, component of the oligosaccharyltransferase (OST) complex.

The protein localises to the membrane. Functionally, subunit of the oligosaccharyl transferase (OST) complex that catalyzes the initial transfer of a defined glycan (Glc(3)Man(9)GlcNAc(2) in eukaryotes) from the lipid carrier dolichol-pyrophosphate to an asparagine residue within an Asn-X-Ser/Thr consensus motif in nascent polypeptide chains, the first step in protein N-glycosylation. N-glycosylation occurs cotranslationally and the complex associates with the Sec61 complex at the channel-forming translocon complex that mediates protein translocation across the endoplasmic reticulum (ER). All subunits are required for a maximal enzyme activity. The polypeptide is Protein KRTCAP2 homolog (Drosophila pseudoobscura pseudoobscura (Fruit fly)).